Here is a 381-residue protein sequence, read N- to C-terminus: Creatine kinase B-type (381 aa).

Ser4 is modified (phosphoserine). In terms of domain architecture, Phosphagen kinase N-terminal spans 11–98 (KLRFPAEDEF…FDPIIEDRHG (88 aa)). Thr35 bears the Phosphothreonine mark. Residue Lys45 forms a Glycyl lysine isopeptide (Lys-Gly) (interchain with G-Cter in ubiquitin) linkage. Val72 contributes to the creatine binding site. The span at 96 to 110 (RHGGYKPSDEHKTDL) shows a compositional bias: basic and acidic residues. The segment at 96–122 (RHGGYKPSDEHKTDLNPDNLQGGDDLD) is disordered. Glycyl lysine isopeptide (Lys-Gly) (interchain with G-Cter in ubiquitin) cross-links involve residues Lys101 and Lys107. Tyr125 is modified (phosphotyrosine). In terms of domain architecture, Phosphagen kinase C-terminal spans 125 to 367 (YVLSSRVRTG…KLLIEMEQRL (243 aa)). Residues 128–132 (SSRVR), Arg130, Arg132, and His191 each bind ATP. Residues 130–138 (RVRTGRSIR) form an internal MTS-like signal region. Ser199 is subject to Phosphoserine. Residue Glu232 participates in creatine binding. ATP is bound at residue Arg236. Tyr269 is modified (3'-nitrotyrosine). A creatine-binding site is contributed by Ser285. Arg292 lines the ATP pocket. The residue at position 309 (Ser309) is a Phosphoserine. ATP is bound by residues Arg320, 320-325 (RGTGGV), and Asp335. A Phosphothreonine modification is found at Thr322. Lys381 is covalently cross-linked (Glycyl lysine isopeptide (Lys-Gly) (interchain with G-Cter in ubiquitin)).

It belongs to the ATP:guanido phosphotransferase family. Dimer of identical or non-identical chains, which can be either B (brain type) or M (muscle type). With MM being the major form in skeletal muscle and myocardium, MB existing in myocardium, and BB existing in many tissues, especially brain. Interacts with SLC12A6 (via C-terminus); the interaction may be required for SLC12A6 potassium-chloride cotransport activity. In terms of processing, ubiquitinated by the ECS(ASB9) complex, leading to its degradation by the proteasome.

It is found in the cytoplasm. The protein resides in the cytosol. The protein localises to the mitochondrion. It localises to the cell membrane. It carries out the reaction creatine + ATP = N-phosphocreatine + ADP + H(+). Its function is as follows. Reversibly catalyzes the transfer of phosphate between ATP and various phosphogens (e.g. creatine phosphate). Creatine kinase isoenzymes play a central role in energy transduction in tissues with large, fluctuating energy demands, such as skeletal muscle, heart, brain and spermatozoa. Acts as a key regulator of adaptive thermogenesis as part of the futile creatine cycle: localizes to the mitochondria of thermogenic fat cells and acts by mediating phosphorylation of creatine to initiate a futile cycle of creatine phosphorylation and dephosphorylation. During the futile creatine cycle, creatine and N-phosphocreatine are in a futile cycle, which dissipates the high energy charge of N-phosphocreatine as heat without performing any mechanical or chemical work. In Homo sapiens (Human), this protein is Creatine kinase B-type.